Here is a 158-residue protein sequence, read N- to C-terminus: Cytosine deaminase (158 aa).

In terms of domain architecture, CMP/dCMP-type deaminase spans 9-129 (KWDQKGMDIA…KYLQTRGHEV (121 aa)). Residue Asn51 coordinates substrate. His62 provides a ligand contact to Zn(2+). Catalysis depends on Glu64, which acts as the Proton donor. 2 residues coordinate Zn(2+): Cys91 and Cys94. Asp155 is a binding site for substrate.

It belongs to the cytidine and deoxycytidylate deaminase family. Homodimer. It depends on Zn(2+) as a cofactor.

Its subcellular location is the cytoplasm. It localises to the nucleus. It catalyses the reaction cytosine + H2O + H(+) = uracil + NH4(+). It functions in the pathway pyrimidine metabolism; UMP biosynthesis via salvage pathway; uracil from cytosine: step 1/1. Catalyzes the hydrolytic deamination of cytosine to uracil or 5-methylcytosine to thymine. Is involved in the pyrimidine salvage pathway, which allows the cell to utilize cytosine for pyrimidine nucleotide synthesis. The sequence is that of Cytosine deaminase from Saccharomyces cerevisiae (strain ATCC 204508 / S288c) (Baker's yeast).